The primary structure comprises 160 residues: MAEKTYPMTLAEKEKLEKELEELKLVRRPEVVERIKIARSYGDLSENSEYEAAKDEQAFVEGQISSLETKIRYAEIVDSDAVAKDEVGIGKTVTIQEVGETEKEVYIIVGSAGADAFAGKVSNESPIGQALIGKKKGDIATVETPVGSYDVKILKVEKTK.

Residues 1–72 are a coiled coil; the sequence is MAEKTYPMTL…QISSLETKIR (72 aa).

Belongs to the GreA/GreB family.

In terms of biological role, necessary for efficient RNA polymerase transcription elongation past template-encoded arresting sites. The arresting sites in DNA have the property of trapping a certain fraction of elongating RNA polymerases that pass through, resulting in locked ternary complexes. Cleavage of the nascent transcript by cleavage factors such as GreA or GreB allows the resumption of elongation from the new 3'terminus. GreA releases sequences of 2 to 3 nucleotides. In Streptococcus gordonii (strain Challis / ATCC 35105 / BCRC 15272 / CH1 / DL1 / V288), this protein is Transcription elongation factor GreA.